Here is a 110-residue protein sequence, read N- to C-terminus: T cell receptor alpha variable 22 (110 aa).

Residues 1-21 form the signal peptide; sequence MKRILGALLGLLSAQVCCVRG. The 89-residue stretch at 22–110 folds into the Ig-like domain; it reads IQVEQSPPDL…DSGVYFCAVE (89 aa). 2 N-linked (GlcNAc...) asparagine glycosylation sites follow: Asn38 and Asn44. A disulfide bridge connects residues Cys43 and Cys107.

In terms of assembly, alpha-beta TR is a heterodimer composed of an alpha and beta chain; disulfide-linked. The alpha-beta TR is associated with the transmembrane signaling CD3 coreceptor proteins to form the TR-CD3 (TcR or TCR). The assembly of alpha-beta TR heterodimers with CD3 occurs in the endoplasmic reticulum where a single alpha-beta TR heterodimer associates with one CD3D-CD3E heterodimer, one CD3G-CD3E heterodimer and one CD247 homodimer forming a stable octameric structure. CD3D-CD3E and CD3G-CD3E heterodimers preferentially associate with TR alpha and TR beta chains, respectively. The association of the CD247 homodimer is the last step of TcR assembly in the endoplasmic reticulum and is required for transport to the cell surface.

The protein localises to the cell membrane. Functionally, v region of the variable domain of T cell receptor (TR) alpha chain that participates in the antigen recognition. Alpha-beta T cell receptors are antigen specific receptors which are essential to the immune response and are present on the cell surface of T lymphocytes. Recognize peptide-major histocompatibility (MH) (pMH) complexes that are displayed by antigen presenting cells (APC), a prerequisite for efficient T cell adaptive immunity against pathogens. Binding of alpha-beta TR to pMH complex initiates TR-CD3 clustering on the cell surface and intracellular activation of LCK that phosphorylates the ITAM motifs of CD3G, CD3D, CD3E and CD247 enabling the recruitment of ZAP70. In turn ZAP70 phosphorylates LAT, which recruits numerous signaling molecules to form the LAT signalosome. The LAT signalosome propagates signal branching to three major signaling pathways, the calcium, the mitogen-activated protein kinase (MAPK) kinase and the nuclear factor NF-kappa-B (NF-kB) pathways, leading to the mobilization of transcription factors that are critical for gene expression and essential for T cell growth and differentiation. The T cell repertoire is generated in the thymus, by V-(D)-J rearrangement. This repertoire is then shaped by intrathymic selection events to generate a peripheral T cell pool of self-MH restricted, non-autoaggressive T cells. Post-thymic interaction of alpha-beta TR with the pMH complexes shapes TR structural and functional avidity. This Homo sapiens (Human) protein is T cell receptor alpha variable 22.